Consider the following 213-residue polypeptide: Uridine kinase (213 aa).

15-22 (GASASGKS) contributes to the ATP binding site.

The protein belongs to the uridine kinase family.

The protein resides in the cytoplasm. It carries out the reaction uridine + ATP = UMP + ADP + H(+). The enzyme catalyses cytidine + ATP = CMP + ADP + H(+). It participates in pyrimidine metabolism; CTP biosynthesis via salvage pathway; CTP from cytidine: step 1/3. It functions in the pathway pyrimidine metabolism; UMP biosynthesis via salvage pathway; UMP from uridine: step 1/1. This is Uridine kinase from Proteus mirabilis (strain HI4320).